The sequence spans 764 residues: Aconitate hydratase (764 aa).

75–77 (DSH) contributes to the substrate binding site. Residues C307, C372, and C375 each contribute to the [4Fe-4S] cluster site. Substrate-binding positions include R405, R410, R568, and 648-649 (SR).

This sequence belongs to the aconitase/IPM isomerase family. It depends on [4Fe-4S] cluster as a cofactor.

The protein localises to the cytoplasm. It carries out the reaction citrate = D-threo-isocitrate. It participates in carbohydrate metabolism; glyoxylate and dicarboxylate metabolism. Its function is as follows. Catalyzes the isomerization of citrate to isocitrate via cis-aconitate. In Cucumis melo var. conomon (Oriental pickling melon), this protein is Aconitate hydratase (ACO).